Consider the following 951-residue polypeptide: AP-1 complex subunit beta-1 (951 aa).

The residue at position 318 (Lys-318) is an N6-acetyllysine. Residue Tyr-574 is modified to 3'-nitrotyrosine.

The protein belongs to the adaptor complexes large subunit family. As to quaternary structure, adaptor protein complex 1 (AP-1) is a heterotetramer composed of two large adaptins (gamma-type subunit AP1G1 and beta-type subunit AP1B1), a medium adaptin (mu-type subunit AP1M1 or AP1M2) and a small adaptin (sigma-type subunit AP1S1 or AP1S2 or AP1S3).

It localises to the cytoplasmic vesicle. It is found in the clathrin-coated vesicle membrane. The protein resides in the golgi apparatus. Functionally, subunit of clathrin-associated adaptor protein complex 1 that plays a role in protein sorting in the late-Golgi/trans-Golgi network (TGN) and/or endosomes. The AP complexes mediate both the recruitment of clathrin to membranes and the recognition of sorting signals within the cytosolic tails of transmembrane cargo molecules. In Bos taurus (Bovine), this protein is AP-1 complex subunit beta-1 (AP2B1).